The chain runs to 80 residues: Turripeptide VI/VII-01 (80 aa).

Residues 1–22 (MRLQLILTITLLLTSFMGYRDA) form the signal peptide. Positions 23-36 (AVIQGKTERSAMKM) are excised as a propeptide. Intrachain disulfides connect cysteine 48/cysteine 61, cysteine 50/cysteine 65, and cysteine 60/cysteine 70. A propeptide spanning residues 77 to 80 (SSAI) is cleaved from the precursor.

In terms of tissue distribution, expressed by the venom duct.

It is found in the secreted. The protein is Turripeptide VI/VII-01 of Gemmula speciosa (Splendid gem-turris).